We begin with the raw amino-acid sequence, 771 residues long: DnaJ homolog subfamily C member 16 (771 aa).

An N-terminal signal peptide occupies residues 1–25; that stretch reads MELKRLSISWQFLIVLVLILQSLSA. Residues 26-532 lie on the Cytoplasmic side of the membrane; it reads LDFDPYRVLG…ESLLHSNWRE (507 aa). In terms of domain architecture, J spans 29–93; the sequence is DPYRVLGVSR…EKRTNYDHYG (65 aa). One can recognise a Thioredoxin domain in the interval 116–244; the sequence is FYFDESFFHF…LRQFVESLLP (129 aa). Residues 533-553 traverse the membrane as a helical; Anchor for type IV membrane protein segment; sequence MMPLLSLIFSALFILFGTVIV. The Extracellular segment spans residues 554-771; sequence QAFSDSNEER…FYIPSWPELD (218 aa). A disordered region spans residues 559–590; sequence SNEERESHPPDKEEVPEKAGKTEPSFTKESSS. Over residues 560 to 579 the composition is skewed to basic and acidic residues; the sequence is NEERESHPPDKEEVPEKAGK. An N-linked (GlcNAc...) asparagine glycan is attached at Asn628.

Its subcellular location is the endoplasmic reticulum membrane. Its function is as follows. Plays an important role in regulating the size of autophagosomes during the formation process. This Rattus norvegicus (Rat) protein is DnaJ homolog subfamily C member 16 (Dnajc16).